The primary structure comprises 358 residues: Histidinol-phosphate aminotransferase (358 aa).

Position 218 is an N6-(pyridoxal phosphate)lysine (Lys-218).

Belongs to the class-II pyridoxal-phosphate-dependent aminotransferase family. Histidinol-phosphate aminotransferase subfamily. In terms of assembly, homodimer. It depends on pyridoxal 5'-phosphate as a cofactor.

The catalysed reaction is L-histidinol phosphate + 2-oxoglutarate = 3-(imidazol-4-yl)-2-oxopropyl phosphate + L-glutamate. The protein operates within amino-acid biosynthesis; L-histidine biosynthesis; L-histidine from 5-phospho-alpha-D-ribose 1-diphosphate: step 7/9. The polypeptide is Histidinol-phosphate aminotransferase (Dehalococcoides mccartyi (strain ATCC BAA-2100 / JCM 16839 / KCTC 5957 / BAV1)).